The chain runs to 256 residues: Acidic leucine-rich nuclear phosphoprotein 32 family member E (256 aa).

LRR repeat units lie at residues 43 to 64, 65 to 87, and 89 to 110; these read ELEFLSMANVQLTSLAKLPTLS, KLRKLELSDNIISGGLEVLAERC, and NLTYLNLSGNKIKDLGTVEALQ. The LRRCT domain occupies 123–161; the sequence is CEITNLEDYRDSIFDLLQQITYLDGFDQEDNEAPDSEDD. The disordered stretch occupies residues 147-256; that stretch reads GFDQEDNEAP…PEDEGEEEDD (110 aa). Composition is skewed to acidic residues over residues 148–205 and 215–235; these read FDQE…EEEV and IQDEDDDDDYVEEGGDEEEEA. Positions 204-256 are ZID domain; that stretch reads EVGLSYLMKEEIQDEDDDDDYVEEGGDEEEEAEGIRGEKRKRDPEDEGEEEDD. A compositionally biased stretch (basic and acidic residues) spans 236 to 247; sequence EGIRGEKRKRDP.

This sequence belongs to the ANP32 family. In terms of assembly, component of a SWR1-like complex. Interacts with H2A.Z/H2AZ1.

Its subcellular location is the cytoplasm. The protein localises to the nucleus. Histone chaperone that specifically mediates the genome-wide removal of histone H2A.Z/H2AZ1 from the nucleosome: removes H2A.Z/H2AZ1 from its normal sites of deposition, especially from enhancer and insulator regions. Not involved in deposition of H2A.Z/H2AZ1 in the nucleosome. May stabilize the evicted H2A.Z/H2AZ1-H2B dimer, thus shifting the equilibrium towards dissociation and the off-chromatin state. Inhibits activity of protein phosphatase 2A (PP2A). Does not inhibit protein phosphatase 1. May play a role in cerebellar development and synaptogenesis. This chain is Acidic leucine-rich nuclear phosphoprotein 32 family member E (ANP32E), found in Gallus gallus (Chicken).